Consider the following 447-residue polypeptide: Beclin-1 (447 aa).

The BH3 motif lies at 105 to 124 (TMENLSRRLKVTSNLFDIMS). The interval 109–156 (LSRRLKVTSNLFDIMSGQTDIDHPLCEECTDTLLDHLDTQLNITENEC) is interaction with BCL2 and BCL2L1 isoform Bcl-X(L). Residues 140–214 (TLLDHLDTQL…VAKELDEGRN (75 aa)) adopt a coiled-coil conformation. An evolutionary conserved domain (ECD) region spans residues 242 to 447 (DDLKSVDNQM…AWVSSQFYNR (206 aa)). A Glycyl lysine isopeptide (Lys-Gly) (interchain with G-Cter in ubiquitin) cross-link involves residue K399. The segment at 422-447 (WTKALKFMLTNLKWGLAWVSSQFYNR) is required for membrane-association.

It belongs to the beclin family. Component of the PI3K (PI3KC3/PI3K-III/class III phosphatidylinositol 3-kinase) complex. Interacts with the poly-Gln domain of ATXN3; the interaction causes deubiquitination at Lys-399 and stabilizes BECN1. In terms of processing, polyubiquitinated at Lys-399 with 'Lys-48'-linkages. 'Lys-48'-linked polyubiquitination of Lys-399 leads to degradation. Deubiquitinated by ATXN3, leading to stabilization.

It is found in the cytoplasm. It localises to the golgi apparatus. Its subcellular location is the trans-Golgi network membrane. The protein resides in the endosome membrane. The protein localises to the endoplasmic reticulum membrane. It is found in the mitochondrion membrane. It localises to the endosome. Its subcellular location is the cytoplasmic vesicle. The protein resides in the autophagosome. Functionally, plays a central role in autophagy. Acts as a core subunit of different PI3K complex forms that mediate formation of phosphatidylinositol 3-phosphate and are believed to play a role in multiple membrane trafficking pathways: PI3KC3-C1 is involved in initiation of autophagosomes and PI3KC3-C2 in maturation of autophagosomes and endocytosis. Involved in regulation of degradative endocytic trafficking and required for the abscission step in cytokinesis, probably in the context of PI3KC3-C2. Essential for the formation of PI3KC3-C2 but not PI3KC3-C1 PI3K complex forms. Involved in endocytosis including endosome formation in neuronal cells. The sequence is that of Beclin-1 (becn1) from Danio rerio (Zebrafish).